A 339-amino-acid polypeptide reads, in one-letter code: DNA-directed RNA polymerase subunit alpha (339 aa).

The tract at residues 1–235 (MVLQKNWQSL…DQLQLFINFD (235 aa)) is alpha N-terminal domain (alpha-NTD). Positions 251-339 (FNRNLLRKVD…DLAKRLDETF (89 aa)) are alpha C-terminal domain (alpha-CTD).

Belongs to the RNA polymerase alpha chain family. Homodimer. The RNAP catalytic core consists of 2 alpha, 1 beta, 1 beta' and 1 omega subunit. When a sigma factor is associated with the core the holoenzyme is formed, which can initiate transcription.

It catalyses the reaction RNA(n) + a ribonucleoside 5'-triphosphate = RNA(n+1) + diphosphate. In terms of biological role, DNA-dependent RNA polymerase catalyzes the transcription of DNA into RNA using the four ribonucleoside triphosphates as substrates. The chain is DNA-directed RNA polymerase subunit alpha from Gluconobacter oxydans (strain 621H) (Gluconobacter suboxydans).